A 291-amino-acid chain; its full sequence is Elongation factor Ts (291 aa).

Positions 80-83 (TDFV) are involved in Mg(2+) ion dislocation from EF-Tu.

The protein belongs to the EF-Ts family.

The protein localises to the cytoplasm. In terms of biological role, associates with the EF-Tu.GDP complex and induces the exchange of GDP to GTP. It remains bound to the aminoacyl-tRNA.EF-Tu.GTP complex up to the GTP hydrolysis stage on the ribosome. This is Elongation factor Ts from Limosilactobacillus reuteri (strain DSM 20016) (Lactobacillus reuteri).